The sequence spans 810 residues: Abnormal pharyngeal pumping eat-20 (810 aa).

A signal peptide spans 1-20 (MTTFCRVLLIFGIYVAVCCA). At 21-748 (QSVEDDVFHF…GKQSSAAASW (728 aa)) the chain is on the extracellular side. 3 N-linked (GlcNAc...) asparagine glycosylation sites follow: Asn-90, Asn-171, and Asn-232. EGF-like domains lie at 220 to 257 (PPSP…DRCE), 258 to 293 (LDVC…LLCE), and 301 to 335 (VAPI…ANCN). 9 cysteine pairs are disulfide-bonded: Cys-224-Cys-235, Cys-229-Cys-245, Cys-247-Cys-256, Cys-261-Cys-272, Cys-266-Cys-281, Cys-283-Cys-292, Cys-305-Cys-314, Cys-309-Cys-323, and Cys-325-Cys-334. The N-linked (GlcNAc...) asparagine glycan is linked to Asn-371. Low complexity predominate over residues 522-531 (FAPTTGTQQP). 2 disordered regions span residues 522–567 (FAPT…STMQ) and 684–738 (PHPQ…HTSS). Acidic residues predominate over residues 542–558 (DENEEEEEEETTEETEE). A helical membrane pass occupies residues 749-769 (IIAIIALIVLGLLLLATSLFI). The Cytoplasmic segment spans residues 770–810 (LRYIRQSRKLHGKYNPAREEHNLSAAYAMPMSHIAKEERLI).

As to expression, highly expressed in the pharynx, circumpharyngeal cells, pharyngeal-intestinal valve and a subset of neurons in larval and embryonic stages. Also moderately expressed in the lining of the intestine, coelomocytes, labial process bundles and some hypodermal cells. In adults, it is predominantly expressed in the pharynx, the pharyngeal-intenstinal valve, some circumpharyngeal cells, m3, m4 and m6 pharyngeal muscles, and IL1, OLQ, BAG and ALN neurons. Weaker expression is observed in labial process bundles, coelomocytes, the ventral hypodermal ridge, the vulval hypodermis and the sensory rays of the adult male tail.

It is found in the membrane. Functionally, regulates pharyngeal pumping during feeding. The protein is Abnormal pharyngeal pumping eat-20 (eat-20) of Caenorhabditis elegans.